Consider the following 147-residue polypeptide: Protein YjdN (147 aa).

The polypeptide is Protein YjdN (yjdN) (Escherichia coli (strain K12)).